Consider the following 715-residue polypeptide: Polyphosphate kinase (715 aa).

Asparagine 60 contributes to the ATP binding site. 2 residues coordinate Mg(2+): arginine 380 and arginine 410. Residue histidine 440 is the Phosphohistidine intermediate of the active site. Residues tyrosine 473, arginine 569, and histidine 597 each coordinate ATP.

This sequence belongs to the polyphosphate kinase 1 (PPK1) family. The cofactor is Mg(2+). An intermediate of this reaction is the autophosphorylated ppk in which a phosphate is covalently linked to a histidine residue through a N-P bond.

It carries out the reaction [phosphate](n) + ATP = [phosphate](n+1) + ADP. Catalyzes the reversible transfer of the terminal phosphate of ATP to form a long-chain polyphosphate (polyP). The sequence is that of Polyphosphate kinase from Erythrobacter litoralis (strain HTCC2594).